Reading from the N-terminus, the 648-residue chain is Replication restart protein PriA (648 aa).

A Helicase ATP-binding domain is found at 131–297; the sequence is TILNESNKPT…EIGKYQLVTL (167 aa). 144–151 contributes to the ATP binding site; that stretch reads GVTGSGKT. A DEAH box motif is present at residues 240-243; sequence DEEH. 8 residues coordinate Zn(2+): Cys-358, Cys-361, Cys-367, Cys-370, Cys-385, Cys-388, Cys-398, and Cys-401. Positions 393-548 constitute a Helicase C-terminal domain; it reads KIFSSCPECL…SFFANELEIR (156 aa).

This sequence belongs to the helicase family. PriA subfamily. As to quaternary structure, component of the replication restart primosome. It depends on Zn(2+) as a cofactor.

It carries out the reaction Couples ATP hydrolysis with the unwinding of duplex DNA by translocating in the 3'-5' direction.. It catalyses the reaction ATP + H2O = ADP + phosphate + H(+). Initiates the restart of stalled replication forks, which reloads the replicative helicase on sites other than the origin of replication. Recognizes and binds to abandoned replication forks and remodels them to uncover a helicase loading site. Promotes assembly of the primosome at these replication forks. In Rickettsia felis (strain ATCC VR-1525 / URRWXCal2) (Rickettsia azadi), this protein is Replication restart protein PriA.